We begin with the raw amino-acid sequence, 221 residues long: Small ribosomal subunit protein uS3 (221 aa).

The 69-residue stretch at 39 to 107 (IRNYIKEKLY…TVILNIIEVK (69 aa)) folds into the KH type-2 domain.

This sequence belongs to the universal ribosomal protein uS3 family. As to quaternary structure, part of the 30S ribosomal subunit. Forms a tight complex with proteins S10 and S14.

Functionally, binds the lower part of the 30S subunit head. Binds mRNA in the 70S ribosome, positioning it for translation. The protein is Small ribosomal subunit protein uS3 of Caldanaerobacter subterraneus subsp. tengcongensis (strain DSM 15242 / JCM 11007 / NBRC 100824 / MB4) (Thermoanaerobacter tengcongensis).